Here is a 68-residue protein sequence, read N- to C-terminus: Large ribosomal subunit protein bL31 (68 aa).

Zn(2+) is bound by residues C16, C18, C36, and C39.

This sequence belongs to the bacterial ribosomal protein bL31 family. Type A subfamily. As to quaternary structure, part of the 50S ribosomal subunit. The cofactor is Zn(2+).

Functionally, binds the 23S rRNA. The sequence is that of Large ribosomal subunit protein bL31 from Dictyoglomus turgidum (strain DSM 6724 / Z-1310).